The sequence spans 403 residues: MALLSAMKLQGRPPPISSNLNPNSKPAGSDSVSLNASEPGSERKPRKFSSQLNRWNRARTLRSGAKLDSTITNGSNNTTGPMRPIESSSRTDVSTLDSDVSSSSNGVSEADMTAAKSIYIVSDGTGWTAEHAVNAALGQFDYCLVDRGCPVNTHLFSGIEDGEKLMEIIKQAAREGAMVIYTLADPSMAEATMRACKLWKIPSLDILGPITESISSHLGTNPSGLSRGITNSSLNEDYFKRIEAIEFTIKHDDGALPENLEKADIVLVGVSRTGKTPLSTYLAQKGYKVSNVPIVNGVDLPKTLFEIDPRKVFGLMINPLVLQGIREARAKSLGLGSSFKTKYSELGSVKEELELAKKIFAENPTWPVIEVTESAIEETAAVVLRLYDERQSNRAMPRISKSY.

A chloroplast-targeting transit peptide spans 1–86; sequence MALLSAMKLQ…NTTGPMRPIE (86 aa). Residues 1–108 form a disordered region; it reads MALLSAMKLQ…DVSSSSNGVS (108 aa). Composition is skewed to low complexity over residues 17–26, 69–80, and 87–108; these read SSNLNPNSKP, STITNGSNNTTG, and SSSR…NGVS. 269–276 is an ADP binding site; it reads GVSRTGKT.

Belongs to the pyruvate, phosphate/water dikinase regulatory protein family. PDRP subfamily. In terms of assembly, interacts with PPDK1. Expressed in green tissues.

Its subcellular location is the plastid. The protein localises to the chloroplast stroma. It catalyses the reaction N(tele)-phospho-L-histidyl/L-threonyl-[pyruvate, phosphate dikinase] + ADP = N(tele)-phospho-L-histidyl/O-phospho-L-threonyl-[pyruvate, phosphate dikinase] + AMP + H(+). The catalysed reaction is N(tele)-phospho-L-histidyl/O-phospho-L-threonyl-[pyruvate, phosphate dikinase] + phosphate + H(+) = N(tele)-phospho-L-histidyl/L-threonyl-[pyruvate, phosphate dikinase] + diphosphate. With respect to regulation, regulated by light/dark exposure. Its function is as follows. Bifunctional serine/threonine kinase and phosphorylase involved in the dark/light-mediated regulation of PPDK by catalyzing its phosphorylation/dephosphorylation. Dark/light-induced changes in stromal concentrations of the competing ADP and Pi substrates govern the direction of the reaction. In the dark, phosphorylates the catalytic intermediate of PPDK (PPDK-HisP), inactivating it. Light exposure induces the phosphorolysis reaction that reactivates PPDK. Unlike the kinase function which can utilize either Thr or Ser as target, the phosphorylase function has a strict substrate requirement for threonyl phosphate. This Arabidopsis thaliana (Mouse-ear cress) protein is Pyruvate, phosphate dikinase regulatory protein 1, chloroplastic (RP1).